Reading from the N-terminus, the 569-residue chain is Proline--tRNA ligase (569 aa).

It belongs to the class-II aminoacyl-tRNA synthetase family. ProS type 1 subfamily. As to quaternary structure, homodimer.

The protein localises to the cytoplasm. The enzyme catalyses tRNA(Pro) + L-proline + ATP = L-prolyl-tRNA(Pro) + AMP + diphosphate. Its function is as follows. Catalyzes the attachment of proline to tRNA(Pro) in a two-step reaction: proline is first activated by ATP to form Pro-AMP and then transferred to the acceptor end of tRNA(Pro). As ProRS can inadvertently accommodate and process non-cognate amino acids such as alanine and cysteine, to avoid such errors it has two additional distinct editing activities against alanine. One activity is designated as 'pretransfer' editing and involves the tRNA(Pro)-independent hydrolysis of activated Ala-AMP. The other activity is designated 'posttransfer' editing and involves deacylation of mischarged Ala-tRNA(Pro). The misacylated Cys-tRNA(Pro) is not edited by ProRS. This Endomicrobium trichonymphae protein is Proline--tRNA ligase.